The chain runs to 413 residues: CinA-like protein (413 aa).

It belongs to the CinA family.

The sequence is that of CinA-like protein from Crocosphaera subtropica (strain ATCC 51142 / BH68) (Cyanothece sp. (strain ATCC 51142)).